The chain runs to 168 residues: Large ribosomal subunit protein uL5 (168 aa).

Belongs to the universal ribosomal protein uL5 family. Part of the 50S ribosomal subunit; contacts the 5S rRNA and probably tRNA. Forms a bridge to the 30S subunit in the 70S ribosome.

Its function is as follows. This is one of the proteins that bind and probably mediate the attachment of the 5S RNA into the large ribosomal subunit, where it forms part of the central protuberance. In the 70S ribosome it contacts protein S13 of the 30S subunit (bridge B1b), connecting the 2 subunits; this bridge is implicated in subunit movement. May contact the P site tRNA; the 5S rRNA and some of its associated proteins might help stabilize positioning of ribosome-bound tRNAs. The chain is Large ribosomal subunit protein uL5 from Methanospirillum hungatei JF-1 (strain ATCC 27890 / DSM 864 / NBRC 100397 / JF-1).